We begin with the raw amino-acid sequence, 20 residues long: Protein PR-L2 (20 aa).

A disordered region spans residues 1–20 (SVFAFENEQSSTIAPARLYK).

It belongs to the BetVI family.

The polypeptide is Protein PR-L2 (Lupinus luteus (European yellow lupine)).